An 84-amino-acid polypeptide reads, in one-letter code: Replication regulatory protein repA2 (84 aa).

Positions 1 to 13 (MSQTENAVTSSSG) are enriched in polar residues. Residues 1–31 (MSQTENAVTSSSGAKRAYRKGNPLSDAEKQR) form a disordered region.

Functionally, this protein is involved in the determination of copy number in gene replication. It binds to the repA promoter thus inhibiting the synthesis of the mRNA for the initiator protein RepA. The chain is Replication regulatory protein repA2 (repA2) from Escherichia coli.